A 2179-amino-acid chain; its full sequence is Genome polyprotein (2179 aa).

Residues 1-20 (MGAQVSTQKSGSHENQNILT) form a disordered region. Glycine 2 carries N-myristoyl glycine; by host lipidation. Topologically, residues 2-1491 (GAQVSTQKSG…AMNQASMIIN (1490 aa)) are cytoplasmic. An amphipathic alpha-helix region spans residues 564 to 584 (ALTEGLGDELEEVIVEKTKQT). Residues histidine 876 and aspartate 894 each act as for protease 2A activity in the active site. Zn(2+)-binding residues include cysteine 911 and cysteine 913. Cysteine 965 acts as the For protease 2A activity in catalysis. The Zn(2+) site is built by cysteine 971 and histidine 973. The interval 1101–1173 (NDGWFRKFND…HISNPTQEKR (73 aa)) is membrane-binding. The tract at residues 1101–1239 (NDGWFRKFND…TPGSGKSLTT (139 aa)) is oligomerization. The interval 1122–1126 (ANKIS) is RNA-binding. The region spanning 1205 to 1361 (KNKMVNYMQF…TTYTKNGKLN (157 aa)) is the SF3 helicase domain. Cysteine 1369, cysteine 1372, cysteine 1381, and cysteine 1386 together coordinate Zn(2+). Residues 1369-1386 (CKDCHQPSNFKKCCPLVC) form a C4-type zinc finger. The interval 1413 to 1420 (DFKSKMQI) is RNA-binding. The oligomerization stretch occupies residues 1424–1429 (LETLFQ). Residues 1492-1507 (TILMFVSTLGIVYVIY) lie within the membrane without spanning it. At 1508–2179 (KLFAQTQGPY…VLRRRWLDLF (672 aa)) the chain is on the cytoplasmic side. Position 1517 is an O-(5'-phospho-RNA)-tyrosine (tyrosine 1517). Positions 1538–1715 (GPNTEFALSL…FSAQLKKQYF (178 aa)) constitute a Peptidase C3 domain. Residues histidine 1577, glutamate 1608, and cysteine 1683 each act as for protease 3C activity in the active site. In terms of domain architecture, RdRp catalytic spans 1946-2060 (GHLMAFDYSN…SYPYELDPQV (115 aa)). The Mg(2+) site is built by aspartate 1952 and aspartate 2046.

The protein belongs to the picornaviruses polyprotein family. As to quaternary structure, interacts with capsid protein VP1 and capsid protein VP3 to form heterotrimeric protomers. Interacts with capsid protein VP0, and capsid protein VP3 to form heterotrimeric protomers. Five protomers subsequently associate to form pentamers which serve as building blocks for the capsid. Interacts with capsid protein VP2, capsid protein VP3 and capsid protein VP4 following cleavage of capsid protein VP0. Interacts with host ICAM1. In terms of assembly, interacts with capsid protein VP1 and capsid protein VP3 in the mature capsid. As to quaternary structure, interacts with capsid protein VP0 and capsid protein VP1 to form heterotrimeric protomers. Five protomers subsequently associate to form pentamers which serve as building blocks for the capsid. Interacts with capsid protein VP4 in the mature capsid. Interacts with protein 2C; this interaction may be important for virion morphogenesis. Interacts with capsid protein VP1 and capsid protein VP3. In terms of assembly, homodimer. As to quaternary structure, homohexamer; forms a hexameric ring structure with 6-fold symmetry characteristic of AAA+ ATPases. Interacts (via N-terminus) with host RTN3 (via reticulon domain); this interaction is important for viral replication. Interacts with capsid protein VP3; this interaction may be important for virion morphogenesis. Interacts with protein 3CD. In terms of assembly, homodimer. Interacts with host GBF1. Interacts (via GOLD domain) with host ACBD3 (via GOLD domain); this interaction allows the formation of a viral protein 3A/ACBD3 heterotetramer with a 2:2 stoichiometry, which will stimulate the recruitment of host PI4KB in order to synthesize PI4P at the viral RNA replication sites. As to quaternary structure, interacts with RNA-directed RNA polymerase. Interacts with protein 3AB and with RNA-directed RNA polymerase. In terms of assembly, interacts with Viral protein genome-linked and with protein 3CD. Requires Mg(2+) as cofactor. Post-translationally, specific enzymatic cleavages in vivo by the viral proteases yield processing intermediates and the mature proteins. Myristoylation is required for the formation of pentamers during virus assembly. Further assembly of 12 pentamers and a molecule of genomic RNA generates the provirion. In terms of processing, during virion maturation, immature virions are rendered infectious following cleavage of VP0 into VP4 and VP2. This maturation seems to be an autocatalytic event triggered by the presence of RNA in the capsid and it is followed by a conformational change infectious virion. Post-translationally, myristoylation is required during RNA encapsidation and formation of the mature virus particle. VPg is uridylylated by the polymerase into VPg-pUpU. This acts as a nucleotide-peptide primer for the genomic RNA replication.

It is found in the virion. The protein resides in the host cytoplasm. The protein localises to the host cytoplasmic vesicle membrane. It localises to the host nucleus. The enzyme catalyses a ribonucleoside 5'-triphosphate + H2O = a ribonucleoside 5'-diphosphate + phosphate + H(+). It carries out the reaction Selective cleavage of Tyr-|-Gly bond in the picornavirus polyprotein.. It catalyses the reaction RNA(n) + a ribonucleoside 5'-triphosphate = RNA(n+1) + diphosphate. The catalysed reaction is Selective cleavage of Gln-|-Gly bond in the poliovirus polyprotein. In other picornavirus reactions Glu may be substituted for Gln, and Ser or Thr for Gly.. Its activity is regulated as follows. Replication or transcription is subject to high level of random mutations by the nucleotide analog ribavirin. Its function is as follows. Forms an icosahedral capsid of pseudo T=3 symmetry with capsid proteins VP2 and VP3. The capsid is 300 Angstroms in diameter, composed of 60 copies of each capsid protein and enclosing the viral positive strand RNA genome. Capsid protein VP1 mainly forms the vertices of the capsid. Capsid protein VP1 interacts with host ICAM1 to provide virion attachment to target host cells. This attachment induces virion internalization. Tyrosine kinases are probably involved in the entry process. After binding to its receptor, the capsid undergoes conformational changes. Capsid protein VP1 N-terminus (that contains an amphipathic alpha-helix) and capsid protein VP4 are externalized. Together, they shape a pore in the host membrane through which viral genome is translocated to host cell cytoplasm. After genome has been released, the channel shrinks. Forms an icosahedral capsid of pseudo T=3 symmetry with capsid proteins VP2 and VP3. The capsid is 300 Angstroms in diameter, composed of 60 copies of each capsid protein and enclosing the viral positive strand RNA genome. Functionally, lies on the inner surface of the capsid shell. After binding to the host receptor, the capsid undergoes conformational changes. Capsid protein VP4 is released, Capsid protein VP1 N-terminus is externalized, and together, they shape a pore in the host membrane through which the viral genome is translocated into the host cell cytoplasm. In terms of biological role, component of immature procapsids, which is cleaved into capsid proteins VP4 and VP2 after maturation. Allows the capsid to remain inactive before the maturation step. Its function is as follows. Cysteine protease that cleaves viral polyprotein and specific host proteins. It is responsible for the autocatalytic cleavage between the P1 and P2 regions, which is the first cleavage occurring in the polyprotein. Also cleaves the host translation initiation factor EIF4G1, in order to shut down the capped cellular mRNA translation. Inhibits the host nucleus-cytoplasm protein and RNA trafficking by cleaving host members of the nuclear pores including NUP62 and NUP153. Counteracts stress granule formation probably by antagonizing its assembly or promoting its dissassembly. Plays an essential role in the virus replication cycle by acting as a viroporin. Creates a pore in the host endoplasmic reticulum and as a consequence releases Ca2+ in the cytoplasm of infected cell. In turn, high levels of cytoplasmic calcium may trigger membrane trafficking and transport of viral ER-associated proteins to viroplasms, sites of viral genome replication. Functionally, induces and associates with structural rearrangements of intracellular membranes. Displays RNA-binding, nucleotide binding and NTPase activities. May play a role in virion morphogenesis and viral RNA encapsidation by interacting with the capsid protein VP3. In terms of biological role, localizes the viral replication complex to the surface of membranous vesicles. Together with protein 3CD binds the Cis-Active RNA Element (CRE) which is involved in RNA synthesis initiation. Acts as a cofactor to stimulate the activity of 3D polymerase, maybe through a nucleid acid chaperone activity. Its function is as follows. Localizes the viral replication complex to the surface of membranous vesicles. It inhibits host cell endoplasmic reticulum-to-Golgi apparatus transport and causes the disassembly of the Golgi complex, possibly through GBF1 interaction. This would result in depletion of MHC, trail receptors and IFN receptors at the host cell surface. Plays an essential role in viral RNA replication by recruiting ACBD3 and PI4KB at the viral replication sites, thereby allowing the formation of the rearranged membranous structures where viral replication takes place. Acts as a primer for viral RNA replication and remains covalently bound to viral genomic RNA. VPg is uridylylated prior to priming replication into VPg-pUpU. The oriI viral genomic sequence may act as a template for this. The VPg-pUpU is then used as primer on the genomic RNA poly(A) by the RNA-dependent RNA polymerase to replicate the viral genome. During genome replication, the VPg-RNA linkage is removed by the host TDP2, thereby accelerating replication. During the late stage of the replication cycle, host TDP2 is excluded from sites of viral RNA synthesis and encapsidation, allowing for the generation of progeny virions. Functionally, involved in the viral replication complex and viral polypeptide maturation. It exhibits protease activity with a specificity and catalytic efficiency that is different from protease 3C. Protein 3CD lacks polymerase activity. Protein 3CD binds to the 5'UTR of the viral genome. In terms of biological role, major viral protease that mediates proteolytic processing of the polyprotein. Cleaves host EIF5B, contributing to host translation shutoff. Cleaves also host PABPC1, contributing to host translation shutoff. Cleaves host NLRP1, triggers host N-glycine-mediated degradation of the autoinhibitory NLRP1 N-terminal fragment. Its function is as follows. Replicates the viral genomic RNA on the surface of intracellular membranes. May form linear arrays of subunits that propagate along a strong head-to-tail interaction called interface-I. Covalently attaches UMP to a tyrosine of VPg, which is used to prime RNA synthesis. The positive stranded RNA genome is first replicated at virus induced membranous vesicles, creating a dsRNA genomic replication form. This dsRNA is then used as template to synthesize positive stranded RNA genomes. ss(+)RNA genomes are either translated, replicated or encapsidated. The polypeptide is Genome polyprotein (Homo sapiens (Human)).